Here is a 170-residue protein sequence, read N- to C-terminus: Peptide deformylase (170 aa).

Residues Cys-94 and His-136 each coordinate Fe cation. Residue Glu-137 is part of the active site. His-140 is a Fe cation binding site.

Belongs to the polypeptide deformylase family. Fe(2+) is required as a cofactor.

The catalysed reaction is N-terminal N-formyl-L-methionyl-[peptide] + H2O = N-terminal L-methionyl-[peptide] + formate. Functionally, removes the formyl group from the N-terminal Met of newly synthesized proteins. Requires at least a dipeptide for an efficient rate of reaction. N-terminal L-methionine is a prerequisite for activity but the enzyme has broad specificity at other positions. The chain is Peptide deformylase from Stenotrophomonas maltophilia (strain K279a).